Consider the following 166-residue polypeptide: uncharacterized protein (166 aa).

The tract at residues 1–58 (MSSEITEGDLQKFHDEHFNAKAVNLWNVAFAQNDRGGNSESANVEYTQSVERYPDGTI) is may interact with smn1.

Part of the core SMN complex at least composed of smn1, yip11/gem2, gem6, gem7 and gem8. Interacts with smn1; the interaction is direct. Interacts with gem7; the interaction is direct.

The protein resides in the cytoplasm. It localises to the nucleus. In terms of biological role, the SMN complex catalyzes the assembly of small nuclear ribonucleoproteins (snRNPs), the building blocks of the spliceosome, and thereby plays an important role in the splicing of cellular pre-mRNAs. Most spliceosomal snRNPs contain a common set of Sm proteins SNRPB, SNRPD1, SNRPD2, SNRPD3, SNRPE, SNRPF and SNRPG that assemble in a heptameric protein ring on the Sm site of the small nuclear RNA to form the core snRNP (Sm core). In the cytosol, the Sm proteins SNRPD1, SNRPD2, SNRPE, SNRPF and SNRPG are trapped in an inactive 6S pICln-Sm complex by the chaperone CLNS1A that controls the assembly of the core snRNP. To assemble core snRNPs, the SMN complex accepts the trapped 5Sm proteins from CLNS1A forming an intermediate. Binding of snRNA inside 5Sm triggers eviction of the SMN complex, thereby allowing binding of SNRPD3 and SNRPB to complete assembly of the core snRNP. This is an uncharacterized protein from Schizosaccharomyces pombe (strain 972 / ATCC 24843) (Fission yeast).